The primary structure comprises 539 residues: MHCDQCQESIKGGCNVRGVCGKDELTAKLQDTLIYAAEGIALCAEGFEGKIDRKYGQFISECLFVTVTNTNFDDVAIVEQIRKALAMRDEVRALAGTTPAHDAANWSGSTKEEFLAKAAACSIDSLSADPDLRSLKSLILYGIKGLAAYTDHAAVLGYHDDDIYAFYVKGLSALTKELPADELLGLVMECGATAVKAMALLDKANTETYGNPEITTVKTGVGTRPGILISGHDLRDMEDLLKQTEGTGVDVYTHCEMLPAHYYPAFKKYDHFVGNYGNSWWSQDREFESFNGPILMTTNCIVPVRESYRGRMFTTGMAGYPGLKHIPARPDGGSKDFSEIIELAKTCKPPIEIENGEIVGGFAHTQVLALADKVVDAVKSGAIRRFVVMAGCDGRHNSRQYYTDVAETLPKDTVILTAGCAKYRYNKLELGDIGGIPRVLDAGQCNDSYSLAVIAMKLQEVFGLENINDLPISYDIAWYEQKAVTVLLALLFLGVKGIRLGPTLPEFLTPNIATTLVKLFDLKPIGTVEADVEAMMAGN.

Residues cysteine 3, cysteine 6, cysteine 14, and cysteine 20 each coordinate [4Fe-4S] cluster. Residues histidine 232, glutamate 256, cysteine 300, cysteine 392, cysteine 420, cysteine 445, glutamate 480, and lysine 482 each contribute to the hybrid [4Fe-2O-2S] cluster site. Cysteine 392 carries the post-translational modification Cysteine persulfide.

Belongs to the HCP family. [4Fe-4S] cluster serves as cofactor. Requires hybrid [4Fe-2O-2S] cluster as cofactor.

The protein localises to the cytoplasm. It carries out the reaction A + NH4(+) + H2O = hydroxylamine + AH2 + H(+). Its function is as follows. Catalyzes the reduction of hydroxylamine to form NH(3) and H(2)O. This is Hydroxylamine reductase from Chlorobaculum tepidum (strain ATCC 49652 / DSM 12025 / NBRC 103806 / TLS) (Chlorobium tepidum).